Consider the following 171-residue polypeptide: uncharacterized protein (171 aa).

Disordered stretches follow at residues aspartate 27–leucine 53 and glycine 82–serine 108. Polar residues predominate over residues glycine 32 to lysine 50.

This is an uncharacterized protein from Homo sapiens (Human).